The following is a 346-amino-acid chain: Guanine nucleotide-binding protein subunit beta-2 (346 aa).

WD repeat units follow at residues 57 to 96 (GHIN…KVQI), 99 to 138 (LRSA…ASGV), 147 to 185 (GYEG…KTMD), 188 to 227 (GHAG…HKQM), 230 to 269 (GHDM…QIAQ), 274 to 313 (QKNT…HTGT), and 316 to 346 (GHEN…RLWL).

It belongs to the WD repeat G protein beta family. In terms of assembly, g proteins are composed of 3 units, alpha, beta and gamma. Interacts with Ggamma30A/Guanine nucleotide-binding protein subunit gamma-e. As to expression, expressed exclusively in photoreceptor cells in the compound eye (at protein level).

The protein localises to the cytoplasm. The protein resides in the cell projection. It is found in the axon. It localises to the rhabdomere. Its function is as follows. Guanine nucleotide-binding proteins (G proteins) are involved as a modulator or transducer in various transmembrane signaling systems. The beta and gamma chains are required for the GTPase activity, for replacement of GDP by GTP, and for G protein-effector interaction. This Drosophila melanogaster (Fruit fly) protein is Guanine nucleotide-binding protein subunit beta-2 (Gbeta76C).